Reading from the N-terminus, the 206-residue chain is MKRPVLIGITGGTGSGKSTVAKEIYNKFDEACIAMIEQDSYYKDQSSIPFEERCKKNYDHPDAFDNELLIDHLKNLVDLNVIEKPIYDFEAHNRKEETIKVEPRDIIILEGILVLQDPKVRELLDIKIYVDTDADVRIIRRLLRDINERGRTVDSVINQYLTVVRPMHMQFIEPSKRYADIIIPEGGHNRVAVDMMVANIKHLLQK.

An ATP-binding site is contributed by 11-18; the sequence is GGTGSGKS.

Belongs to the uridine kinase family.

It is found in the cytoplasm. It carries out the reaction uridine + ATP = UMP + ADP + H(+). The enzyme catalyses cytidine + ATP = CMP + ADP + H(+). It participates in pyrimidine metabolism; CTP biosynthesis via salvage pathway; CTP from cytidine: step 1/3. The protein operates within pyrimidine metabolism; UMP biosynthesis via salvage pathway; UMP from uridine: step 1/1. This chain is Uridine kinase, found in Clostridium botulinum (strain Langeland / NCTC 10281 / Type F).